The primary structure comprises 440 residues: UDP-N-acetylmuramoylalanine--D-glutamate ligase (440 aa).

115–121 contacts ATP; sequence GSNGKST.

It belongs to the MurCDEF family.

The protein localises to the cytoplasm. The enzyme catalyses UDP-N-acetyl-alpha-D-muramoyl-L-alanine + D-glutamate + ATP = UDP-N-acetyl-alpha-D-muramoyl-L-alanyl-D-glutamate + ADP + phosphate + H(+). It functions in the pathway cell wall biogenesis; peptidoglycan biosynthesis. In terms of biological role, cell wall formation. Catalyzes the addition of glutamate to the nucleotide precursor UDP-N-acetylmuramoyl-L-alanine (UMA). This chain is UDP-N-acetylmuramoylalanine--D-glutamate ligase, found in Aliivibrio fischeri (strain MJ11) (Vibrio fischeri).